The primary structure comprises 2617 residues: Ubiquitin carboxyl-terminal hydrolase 24 (2617 aa).

Positions 3–44 (SEEEQHMTTLLCMGFSDPATIRKALRLAKNDINEAVALLTNE) constitute a UBA domain. Residues 45-99 (RPGLDYGGYEPMDSGGPSPGPGGGPRGDSGSDGSGPSRGGSTGGGGGFDPPPAYH) are disordered. Phosphoserine is present on residues serine 62 and serine 85. The span at 65-92 (PGGGPRGDSGSDGSGPSRGGSTGGGGGF) shows a compositional bias: gly residues. Tyrosine 939 bears the Phosphotyrosine mark. 2 disordered regions span residues 1030 to 1056 (KTSG…SGAF) and 1127 to 1148 (LLSE…QQHQ). 2 stretches are compositionally biased toward low complexity: residues 1031–1056 (TSGS…SGAF) and 1128–1148 (LSET…QQHQ). Phosphoserine occurs at positions 1138 and 1282. The USP domain maps to 1686-2039 (VGLRNGGATC…NAYMLFYQRV (354 aa)). Residue cysteine 1695 is the Nucleophile of the active site. The disordered stretch occupies residues 1920–1942 (QDSSSEVGENGRNMDQGGGGSPR). A Phosphoserine modification is found at serine 1940. The active-site Proton acceptor is histidine 1967. A phosphoserine mark is found at serine 2044, serine 2074, and serine 2558. Residues 2060-2087 (AEDLSLSAPSSPEISPQSSPRPHRPNND) form a disordered region. Residues 2066–2079 (SAPSSPEISPQSSP) are compositionally biased toward low complexity. The residue at position 2562 (threonine 2562) is a Phosphothreonine. The segment at 2572–2617 (EKEQSGSSNGSESSPANENGERHLQQGSESPMMIGELRSDLDDVDP) is disordered. The segment covering 2576–2589 (SGSSNGSESSPANE) has biased composition (low complexity). Serine 2601 carries the phosphoserine modification. Residues 2608–2617 (LRSDLDDVDP) are compositionally biased toward basic and acidic residues.

This sequence belongs to the peptidase C19 family.

The catalysed reaction is Thiol-dependent hydrolysis of ester, thioester, amide, peptide and isopeptide bonds formed by the C-terminal Gly of ubiquitin (a 76-residue protein attached to proteins as an intracellular targeting signal).. Its function is as follows. Protease that can remove conjugated ubiquitin from target proteins and polyubiquitin chains. Deubiquitinates DDB2, preventing its proteasomal degradation. In Mus musculus (Mouse), this protein is Ubiquitin carboxyl-terminal hydrolase 24 (Usp24).